A 223-amino-acid polypeptide reads, in one-letter code: Endonuclease V (223 aa).

Positions 35 and 103 each coordinate Mg(2+).

Belongs to the endonuclease V family. The cofactor is Mg(2+).

It localises to the cytoplasm. It catalyses the reaction Endonucleolytic cleavage at apurinic or apyrimidinic sites to products with a 5'-phosphate.. In terms of biological role, DNA repair enzyme involved in the repair of deaminated bases. Selectively cleaves double-stranded DNA at the second phosphodiester bond 3' to a deoxyinosine leaving behind the intact lesion on the nicked DNA. This is Endonuclease V from Salmonella enteritidis PT4 (strain P125109).